The sequence spans 245 residues: tRNA (guanine-N(7)-)-methyltransferase (245 aa).

S-adenosyl-L-methionine is bound by residues Glu71, Glu96, Asp123, and Asp146. Asp146 is an active-site residue. Lys150 is a binding site for substrate. The interaction with RNA stretch occupies residues 152–157 (KHNKRR). Substrate contacts are provided by residues Asp182 and 224 to 227 (TKFE).

It belongs to the class I-like SAM-binding methyltransferase superfamily. TrmB family.

It carries out the reaction guanosine(46) in tRNA + S-adenosyl-L-methionine = N(7)-methylguanosine(46) in tRNA + S-adenosyl-L-homocysteine. It participates in tRNA modification; N(7)-methylguanine-tRNA biosynthesis. In terms of biological role, catalyzes the formation of N(7)-methylguanine at position 46 (m7G46) in tRNA. The chain is tRNA (guanine-N(7)-)-methyltransferase from Albidiferax ferrireducens (strain ATCC BAA-621 / DSM 15236 / T118) (Rhodoferax ferrireducens).